Consider the following 488-residue polypeptide: DNA polymerase II small subunit (488 aa).

This sequence belongs to the DNA polymerase delta/II small subunit family. In terms of assembly, heterodimer of a large subunit and a small subunit.

It carries out the reaction DNA(n) + a 2'-deoxyribonucleoside 5'-triphosphate = DNA(n+1) + diphosphate. It catalyses the reaction Exonucleolytic cleavage in the 3'- to 5'-direction to yield nucleoside 5'-phosphates.. Functionally, possesses two activities: a DNA synthesis (polymerase) and an exonucleolytic activity that degrades single-stranded DNA in the 3' to 5' direction. Has a template-primer preference which is characteristic of a replicative DNA polymerase. In Archaeoglobus fulgidus (strain ATCC 49558 / DSM 4304 / JCM 9628 / NBRC 100126 / VC-16), this protein is DNA polymerase II small subunit (polB).